The sequence spans 294 residues: Acetylglutamate kinase (294 aa).

Substrate-binding positions include 63–64 (GG), arginine 85, and asparagine 188.

Belongs to the acetylglutamate kinase family. ArgB subfamily.

Its subcellular location is the cytoplasm. It carries out the reaction N-acetyl-L-glutamate + ATP = N-acetyl-L-glutamyl 5-phosphate + ADP. The protein operates within amino-acid biosynthesis; L-arginine biosynthesis; N(2)-acetyl-L-ornithine from L-glutamate: step 2/4. Catalyzes the ATP-dependent phosphorylation of N-acetyl-L-glutamate. The sequence is that of Acetylglutamate kinase from Methanococcus vannielii (strain ATCC 35089 / DSM 1224 / JCM 13029 / OCM 148 / SB).